A 407-amino-acid polypeptide reads, in one-letter code: Tyrosine--tRNA ligase (407 aa).

L-tyrosine is bound at residue Tyr-35. Positions 40–49 match the 'HIGH' region motif; the sequence is PTADSLHVGH. The L-tyrosine site is built by Tyr-168 and Gln-172. The 'KMSKS' region motif lies at 228 to 232; it reads KMGKT. Residue Lys-231 coordinates ATP. One can recognise an S4 RNA-binding domain in the interval 341–405; the sequence is NPLVDLLAKC…RGKKNFNRIV (65 aa).

The protein belongs to the class-I aminoacyl-tRNA synthetase family. TyrS type 1 subfamily. As to quaternary structure, homodimer.

It localises to the cytoplasm. The enzyme catalyses tRNA(Tyr) + L-tyrosine + ATP = L-tyrosyl-tRNA(Tyr) + AMP + diphosphate + H(+). In terms of biological role, catalyzes the attachment of tyrosine to tRNA(Tyr) in a two-step reaction: tyrosine is first activated by ATP to form Tyr-AMP and then transferred to the acceptor end of tRNA(Tyr). In Clostridium botulinum (strain 657 / Type Ba4), this protein is Tyrosine--tRNA ligase.